The chain runs to 197 residues: Phospholipid hydroperoxide glutathione peroxidase (197 aa).

Ser40 is modified (phosphoserine). Sec73 is an active-site residue. Sec73 is a non-standard amino acid (selenocysteine).

It belongs to the glutathione peroxidase family. Monomer. Has a tendency to form higher mass oligomers. Interacts with FUNDC1; this interaction promotes GPX4 recruitment into mitochondria through TOM/TIM complex where it is degraded by mitophagy.

Its subcellular location is the mitochondrion. The protein resides in the cytoplasm. It catalyses the reaction a hydroperoxy polyunsaturated fatty acid + 2 glutathione = a hydroxy polyunsaturated fatty acid + glutathione disulfide + H2O. The enzyme catalyses 2 glutathione + H2O2 = glutathione disulfide + 2 H2O. It carries out the reaction tert-butyl hydroperoxide + 2 glutathione = tert-butanol + glutathione disulfide + H2O. The catalysed reaction is cumene hydroperoxide + 2 glutathione = 2-phenylpropan-2-ol + glutathione disulfide + H2O. It catalyses the reaction (9S)-hydroperoxy-(10E,12Z)-octadecadienoate + 2 glutathione = (9S)-hydroxy-(10E,12Z)-octadecadienoate + glutathione disulfide + H2O. The enzyme catalyses (13S)-hydroperoxy-(9Z,11E)-octadecadienoate + 2 glutathione = (13S)-hydroxy-(9Z,11E)-octadecadienoate + glutathione disulfide + H2O. It carries out the reaction (5S)-hydroperoxy-(6E,8Z,11Z,14Z)-eicosatetraenoate + 2 glutathione = (5S)-hydroxy-(6E,8Z,11Z,14Z)-eicosatetraenoate + glutathione disulfide + H2O. The catalysed reaction is (12R)-hydroperoxy-(5Z,8Z,10E,14Z)-eicosatetraenoate + 2 glutathione = (12R)-hydroxy-(5Z,8Z,10E,14Z)-eicosatetraenoate + glutathione disulfide + H2O. It catalyses the reaction (12S)-hydroperoxy-(5Z,8Z,10E,14Z)-eicosatetraenoate + 2 glutathione = (12S)-hydroxy-(5Z,8Z,10E,14Z)-eicosatetraenoate + glutathione disulfide + H2O. The enzyme catalyses (15S)-hydroperoxy-(5Z,8Z,11Z,13E)-eicosatetraenoate + 2 glutathione = (15S)-hydroxy-(5Z,8Z,11Z,13E)-eicosatetraenoate + glutathione disulfide + H2O. It carries out the reaction (5S)-hydroperoxy-(6E,8Z,11Z,14Z,17Z)-eicosapentaenoate + 2 glutathione = (5S)-hydroxy-(6E,8Z,11Z,14Z,17Z)-eicosapentaenoate + glutathione disulfide + H2O. The catalysed reaction is (12S)-hydroperoxy-(5Z,8Z,10E,14Z,17Z)-eicosapentaenoate + 2 glutathione = (12S)-hydroxy-(5Z,8Z,10E,14Z,17Z)-eicosapentaenoate + glutathione disulfide + H2O. It catalyses the reaction (15S)-hydroperoxy-(5Z,8Z,11Z,13E,17Z)-eicosapentaenoate + 2 glutathione = (15S)-hydroxy-(5Z,8Z,11Z,13E,17Z)-eicosapentaenoate + glutathione disulfide + H2O. The enzyme catalyses (15S)-hydroperoxy-(11Z,13E)-eicosadienoate + 2 glutathione = (15S)-hydroxy-(11Z,13E)-eicosadienoate + glutathione disulfide + H2O. It carries out the reaction (17S)-hydroperoxy-(4Z,7Z,10Z,13Z,15E,19Z)-docosahexaenoate + 2 glutathione = (17S)-hydroxy-(4Z,7Z,10Z,13Z,15E,19Z)-docosahexaenoate + glutathione disulfide + H2O. The catalysed reaction is a hydroperoxy-1,2-diacyl-glycero-3-phosphocholine + 2 glutathione = a hydroxy-1,2-diacyl-glycero-3-phosphocholine + glutathione disulfide + H2O. In terms of biological role, essential antioxidant peroxidase that directly reduces phospholipid hydroperoxide even if they are incorporated in membranes and lipoproteins. Can also reduce fatty acid hydroperoxide, cholesterol hydroperoxide and thymine hydroperoxide. Plays a key role in protecting cells from oxidative damage by preventing membrane lipid peroxidation. Required to prevent cells from ferroptosis, a non-apoptotic cell death resulting from an iron-dependent accumulation of lipid reactive oxygen species. The presence of selenocysteine (Sec) versus Cys at the active site is essential for life: it provides resistance to overoxidation and prevents cells against ferroptosis. The presence of Sec at the active site is also essential for the survival of a specific type of parvalbumin-positive interneurons, thereby preventing against fatal epileptic seizures. May be required to protect cells from the toxicity of ingested lipid hydroperoxides. Required for normal sperm development and male fertility. Essential for maturation and survival of photoreceptor cells. Plays a role in a primary T-cell response to viral and parasitic infection by protecting T-cells from ferroptosis and by supporting T-cell expansion. Plays a role of glutathione peroxidase in platelets in the arachidonic acid metabolism. Reduces hydroperoxy ester lipids formed by a 15-lipoxygenase that may play a role as down-regulator of the cellular 15-lipoxygenase pathway. Can also reduce small soluble hydroperoxides such as H2O2, cumene hydroperoxide and tert-butyl hydroperoxide. The chain is Phospholipid hydroperoxide glutathione peroxidase from Sus scrofa (Pig).